A 207-amino-acid polypeptide reads, in one-letter code: SPRY domain-containing protein 4 (207 aa).

Positions 12–206 (CRWGAKRLGV…THSGLEVPEG (195 aa)) constitute a B30.2/SPRY domain. 2 positions are modified to N6-acetyllysine: Lys-53 and Lys-130. At Lys-139 the chain carries N6-succinyllysine.

In Homo sapiens (Human), this protein is SPRY domain-containing protein 4 (SPRYD4).